The sequence spans 600 residues: Prostaglandin G/H synthase 1 (600 aa).

The signal sequence occupies residues 1-24 (MSRQGISLRFPLLLLLLSPSPVLP). In terms of domain architecture, EGF-like spans 32-70 (PVNPCCYYPCQHQGICVRFGLDRYQCDCTRTGYYGPNCT). 4 disulfides stabilise this stretch: Cys36–Cys47, Cys37–Cys159, Cys41–Cys57, and Cys59–Cys69. Residues Asn68, Asn104, and Asn144 are each glycosylated (N-linked (GlcNAc...) asparagine). His207 functions as the Proton acceptor in the catalytic mechanism. The active-site For cyclooxygenase activity is Tyr385. A heme b-binding site is contributed by His388. Residue Asn410 is glycosylated (N-linked (GlcNAc...) asparagine). Cys569 and Cys575 are disulfide-bonded.

It belongs to the prostaglandin G/H synthase family. In terms of assembly, homodimer. The cofactor is heme b.

Its subcellular location is the microsome membrane. The protein localises to the endoplasmic reticulum membrane. It catalyses the reaction (5Z,8Z,11Z,14Z)-eicosatetraenoate + AH2 + 2 O2 = prostaglandin H2 + A + H2O. The enzyme catalyses (5Z,8Z,11Z,14Z)-eicosatetraenoate + 2 O2 = prostaglandin G2. The catalysed reaction is prostaglandin G2 + AH2 = prostaglandin H2 + A + H2O. It carries out the reaction (9Z,12Z)-octadecadienoate + AH2 + O2 = (9R)-hydroxy-(10E,12Z)-octadecadienoate + A + H2O. It catalyses the reaction (9Z,12Z)-octadecadienoate + AH2 + O2 = (9S)-hydroxy-(10E,12Z)-octadecadienoate + A + H2O. The enzyme catalyses (9Z,12Z)-octadecadienoate + AH2 + O2 = (13S)-hydroxy-(9Z,11E)-octadecadienoate + A + H2O. The catalysed reaction is (9Z,12Z)-octadecadienoate + AH2 + O2 = (13R)-hydroxy-(9Z,11E)-octadecadienoate + A + H2O. Its pathway is lipid metabolism; prostaglandin biosynthesis. The cyclooxygenase activity is inhibited by nonsteroidal anti-inflammatory drugs (NSAIDs) including ibuprofen, flurbiprofen, ketoprofen, naproxen, flurbiprofen, anirolac, fenclofenac and diclofenac. In terms of biological role, dual cyclooxygenase and peroxidase that plays an important role in the biosynthesis pathway of prostanoids, a class of C20 oxylipins mainly derived from arachidonate ((5Z,8Z,11Z,14Z)-eicosatetraenoate, AA, C20:4(n-6)), with a particular role in the inflammatory response. The cyclooxygenase activity oxygenates AA to the hydroperoxy endoperoxide prostaglandin G2 (PGG2), and the peroxidase activity reduces PGG2 to the hydroxy endoperoxide prostaglandin H2 (PGH2), the precursor of all 2-series prostaglandins and thromboxanes. This complex transformation is initiated by abstraction of hydrogen at carbon 13 (with S-stereochemistry), followed by insertion of molecular O2 to form the endoperoxide bridge between carbon 9 and 11 that defines prostaglandins. The insertion of a second molecule of O2 (bis-oxygenase activity) yields a hydroperoxy group in PGG2 that is then reduced to PGH2 by two electrons. Involved in the constitutive production of prostanoids in particular in the stomach and platelets. In gastric epithelial cells, it is a key step in the generation of prostaglandins, such as prostaglandin E2 (PGE2), which plays an important role in cytoprotection. In platelets, it is involved in the generation of thromboxane A2 (TXA2), which promotes platelet activation and aggregation, vasoconstriction and proliferation of vascular smooth muscle cells. Can also use linoleate (LA, (9Z,12Z)-octadecadienoate, C18:2(n-6)) as substrate and produce hydroxyoctadecadienoates (HODEs) in a regio- and stereospecific manner, being (9R)-HODE ((9R)-hydroxy-(10E,12Z)-octadecadienoate) and (13S)-HODE ((13S)-hydroxy-(9Z,11E)-octadecadienoate) its major products. This Bos taurus (Bovine) protein is Prostaglandin G/H synthase 1 (PTGS1).